A 431-amino-acid polypeptide reads, in one-letter code: Adenylosuccinate synthetase (431 aa).

Residues 12 to 18 (GDEGKGK) and 40 to 42 (GHT) contribute to the GTP site. Residue Asp13 is the Proton acceptor of the active site. 2 residues coordinate Mg(2+): Asp13 and Gly40. Residues 13 to 16 (DEGK), 38 to 41 (NAGH), Thr129, Arg143, Gln224, Thr239, and Arg303 contribute to the IMP site. Catalysis depends on His41, which acts as the Proton donor. 299–305 (VTTGRAR) provides a ligand contact to substrate. GTP is bound by residues Arg305, 331–333 (KLD), and 413–415 (GVG).

The protein belongs to the adenylosuccinate synthetase family. Homodimer. Mg(2+) is required as a cofactor.

It is found in the cytoplasm. It catalyses the reaction IMP + L-aspartate + GTP = N(6)-(1,2-dicarboxyethyl)-AMP + GDP + phosphate + 2 H(+). Its pathway is purine metabolism; AMP biosynthesis via de novo pathway; AMP from IMP: step 1/2. Plays an important role in the de novo pathway of purine nucleotide biosynthesis. Catalyzes the first committed step in the biosynthesis of AMP from IMP. This is Adenylosuccinate synthetase from Mycolicibacterium vanbaalenii (strain DSM 7251 / JCM 13017 / BCRC 16820 / KCTC 9966 / NRRL B-24157 / PYR-1) (Mycobacterium vanbaalenii).